An 858-amino-acid polypeptide reads, in one-letter code: Phosphoenolpyruvate carboxylase (858 aa).

Active-site residues include histidine 145 and lysine 531.

It belongs to the PEPCase type 1 family. Mg(2+) serves as cofactor.

It carries out the reaction oxaloacetate + phosphate = phosphoenolpyruvate + hydrogencarbonate. Functionally, forms oxaloacetate, a four-carbon dicarboxylic acid source for the tricarboxylic acid cycle. The protein is Phosphoenolpyruvate carboxylase of Thermus thermophilus (strain ATCC BAA-163 / DSM 7039 / HB27).